The following is a 252-amino-acid chain: 14-3-3 protein homolog 1 (252 aa).

It belongs to the 14-3-3 family.

This is 14-3-3 protein homolog 1 from Schistosoma mansoni (Blood fluke).